The chain runs to 196 residues: MATPTKVSAVAEITNDFKESNAAVLTEYRGLTVAQLKQLRVSLGQDTKFAVVKNTLTAIAAKEAGVEAFDGQLAGPTAIAFIKGDAVAAAKSLTDFAKTNKQLVIKTGYFEGKALNASEVAALAALESRELQLAKVAGILKAPAAAAARIIDALRLKLEEENGAPAAAEAPAAEEAPAAEAAETEAPAEAAATEEN.

A disordered region spans residues 163-196 (GAPAAAEAPAAEEAPAAEAAETEAPAEAAATEEN). Positions 164 to 196 (APAAAEAPAAEEAPAAEAAETEAPAEAAATEEN) are enriched in low complexity.

Belongs to the universal ribosomal protein uL10 family. As to quaternary structure, part of the ribosomal stalk of the 50S ribosomal subunit. The N-terminus interacts with L11 and the large rRNA to form the base of the stalk. The C-terminus forms an elongated spine to which L12 dimers bind in a sequential fashion forming a multimeric L10(L12)X complex.

Forms part of the ribosomal stalk, playing a central role in the interaction of the ribosome with GTP-bound translation factors. In Arthrobacter sp. (strain FB24), this protein is Large ribosomal subunit protein uL10.